The sequence spans 221 residues: MIRQIDFYGYPYVGIYAANTEQVVVLPPDLPQATVDLVAETLGTAVVRTLINESTLIGSMMTGNSNGFIVSDLTLDREANLLQEHGKVTRLKGKMTAAGNLILANDTAALVHPALTDKNIEAIEKTLKVEVRRGTIGGLKTVGMAGCATNKGILVHPRATEEELTVLEDLFKLPVDIGTVSFGSPLVGSAILATTKGLITGTRTSGPELGRIEDALGFIEE.

This sequence belongs to the eIF-6 family.

Functionally, binds to the 50S ribosomal subunit and prevents its association with the 30S ribosomal subunit to form the 70S initiation complex. The protein is Translation initiation factor 6 of Methanocella arvoryzae (strain DSM 22066 / NBRC 105507 / MRE50).